The chain runs to 218 residues: Glutathione S-transferase U24 (218 aa).

Residues 3-82 (DEVILLDFWA…YIDETWPDNN (80 aa)) form the GST N-terminal domain. Glutathione contacts are provided by residues 13–14 (SM), 39–40 (NK), 53–54 (KI), and 66–67 (ES). One can recognise a GST C-terminal domain in the interval 88–215 (DPYKRAHAKF…TFISERRKKL (128 aa)). Thr148 is subject to Phosphothreonine.

It belongs to the GST superfamily. Tau family.

The protein localises to the cytoplasm. The protein resides in the cytosol. The enzyme catalyses RX + glutathione = an S-substituted glutathione + a halide anion + H(+). Its function is as follows. May be involved in the conjugation of reduced glutathione to a wide number of exogenous and endogenous hydrophobic electrophiles and have a detoxification role against certain herbicides. In Arabidopsis thaliana (Mouse-ear cress), this protein is Glutathione S-transferase U24 (GSTU24).